The sequence spans 322 residues: Crystallin J1A (322 aa).

Belongs to the ADP-ribosylglycohydrolase family. J1 crystallin subfamily. In terms of tissue distribution, expressed in the rhopalia. Present in both the large and small eyes.

This is Crystallin J1A from Tripedalia cystophora (Jellyfish).